A 395-amino-acid chain; its full sequence is NAD(P)H-quinone oxidoreductase subunit H (395 aa).

The protein belongs to the complex I 49 kDa subunit family. NDH-1 can be composed of about 15 different subunits; different subcomplexes with different compositions have been identified which probably have different functions.

The protein localises to the cellular thylakoid membrane. The catalysed reaction is a plastoquinone + NADH + (n+1) H(+)(in) = a plastoquinol + NAD(+) + n H(+)(out). It catalyses the reaction a plastoquinone + NADPH + (n+1) H(+)(in) = a plastoquinol + NADP(+) + n H(+)(out). Functionally, NDH-1 shuttles electrons from an unknown electron donor, via FMN and iron-sulfur (Fe-S) centers, to quinones in the respiratory and/or the photosynthetic chain. The immediate electron acceptor for the enzyme in this species is believed to be plastoquinone. Couples the redox reaction to proton translocation, and thus conserves the redox energy in a proton gradient. Cyanobacterial NDH-1 also plays a role in inorganic carbon-concentration. The polypeptide is NAD(P)H-quinone oxidoreductase subunit H (Prochlorococcus marinus (strain MIT 9301)).